The chain runs to 172 residues: NADH-ubiquinone oxidoreductase chain 6 (172 aa).

4 helical membrane passes run 1–21 (MNNY…GLAL), 38–58 (VGCL…VFLI), 86–106 (WLIL…ICVL), and 147–167 (CATW…FIII).

The protein belongs to the complex I subunit 6 family. As to quaternary structure, core subunit of respiratory chain NADH dehydrogenase (Complex I) which is composed of 45 different subunits.

Its subcellular location is the mitochondrion inner membrane. The catalysed reaction is a ubiquinone + NADH + 5 H(+)(in) = a ubiquinol + NAD(+) + 4 H(+)(out). In terms of biological role, core subunit of the mitochondrial membrane respiratory chain NADH dehydrogenase (Complex I) which catalyzes electron transfer from NADH through the respiratory chain, using ubiquinone as an electron acceptor. Essential for the catalytic activity and assembly of complex I. This is NADH-ubiquinone oxidoreductase chain 6 (Mtnd6) from Mus musculus (Mouse).